A 196-amino-acid chain; its full sequence is RNA-binding protein with multiple splicing 2 (196 aa).

An RRM domain is found at 20-97; the sequence is RTLFVSGLPI…QTLRLEFAKA (78 aa). Residues 30–40 are important for homodimerization; sequence DIKPRELYLLF.

As to quaternary structure, homodimer. As to expression, expressed in developing heart, pronephros, retina and epiphysis. In adult, high expression in heart, moderate in kidney, undetectable in liver, lung and skeletal muscle.

It is found in the cytoplasm. Its subcellular location is the nucleus. The protein resides in the stress granule. Functionally, RNA-binding protein involved in the regulation of smooth muscle cell differentiation and proliferation in the gastrointestinal system. Binds NOG mRNA, the major inhibitor of the bone morphogenetic protein (BMP) pathway. Mediates an increase of NOG mRNA levels, thereby contributing to the negative regulation of BMP signaling pathway and promoting reversible dedifferentiation and proliferation of smooth muscle cells. Acts as a pre-mRNA alternative splicing regulator. Mediates ACTN1 and FLNB alternative splicing. Likely binds to mRNA tandem CAC trinucleotide or CA dinucleotide motifs. The sequence is that of RNA-binding protein with multiple splicing 2 from Xenopus laevis (African clawed frog).